The primary structure comprises 37 residues: Large ribosomal subunit protein bL36A (37 aa).

The protein belongs to the bacterial ribosomal protein bL36 family.

The sequence is that of Large ribosomal subunit protein bL36A from Actinobacillus pleuropneumoniae serotype 3 (strain JL03).